Consider the following 160-residue polypeptide: Cytochrome b6-f complex subunit 4 (160 aa).

3 helical membrane passes run 36–56, 95–115, and 131–151; these read LLYIFPVVILGTIACNVGLAV, LLGVLLMVSVPTGLLTVPFLE, and TVFLIGTVVALWLGIGATLPI.

The protein belongs to the cytochrome b family. PetD subfamily. As to quaternary structure, the 4 large subunits of the cytochrome b6-f complex are cytochrome b6, subunit IV (17 kDa polypeptide, petD), cytochrome f and the Rieske protein, while the 4 small subunits are petG, petL, petM and petN. The complex functions as a dimer.

It is found in the plastid. It localises to the chloroplast thylakoid membrane. Functionally, component of the cytochrome b6-f complex, which mediates electron transfer between photosystem II (PSII) and photosystem I (PSI), cyclic electron flow around PSI, and state transitions. The sequence is that of Cytochrome b6-f complex subunit 4 from Sorghum bicolor (Sorghum).